Consider the following 790-residue polypeptide: F-box and leucine-rich repeat protein 13 (790 aa).

Residues 237–283 (AFDISVLPEQAILQIFLYLTFKDMMACSRVNRSWMAMIQRGSLWNSI) enclose the F-box domain. 6 LRR repeats span residues 503-525 (QLTVLNLTNCIRIGDIGLKHFFD), 531-552 (RLRELNLTNCSLLGDSSVIRLS), 557-579 (NLHYLNLRNCEHLTDLAIEYIAS), 582-602 (SLISVDLSGTLISNEGMTILS), 606-628 (KLREVSVSDCVNITDFGIRAYCK), and 632-657 (LLEHLDVSYCSQLTDDIIKTIAIFCT).

It belongs to the DRC6 family. In terms of assembly, component of the nexin-dynein regulatory complex (N-DRC). Directly interacts with SKP1 and CUL1. Interacts with TCTE1/DRC5.

The protein localises to the cytoplasm. It is found in the cytoskeleton. The protein resides in the flagellum axoneme. It localises to the microtubule organizing center. Its subcellular location is the centrosome. Its function is as follows. Substrate-recognition component of the SCF (SKP1-CUL1-F-box protein)-type E3 ubiquitin ligase complex. Component of the nexin-dynein regulatory complex (N-DRC), a key regulator of ciliary/flagellar motility which maintains the alignment and integrity of the distal axoneme and regulates microtubule sliding in motile axonemes. Specifically targets CEP192 isoform 3 for ubiquitin-mediated proteolysis and thereby acts as a regulator of microtubule nucleation activity. In Mus musculus (Mouse), this protein is F-box and leucine-rich repeat protein 13 (Fbxl13).